The following is a 258-amino-acid chain: Acetylglutamate kinase (258 aa).

Substrate contacts are provided by residues 44-45 (GG), Arg66, and Asn158. ATP-binding positions include 181-186 (DVSGIL) and 209-211 (IIT).

It belongs to the acetylglutamate kinase family. ArgB subfamily. Homodimer.

It is found in the cytoplasm. The enzyme catalyses N-acetyl-L-glutamate + ATP = N-acetyl-L-glutamyl 5-phosphate + ADP. The protein operates within amino-acid biosynthesis; L-arginine biosynthesis; N(2)-acetyl-L-ornithine from L-glutamate: step 2/4. In terms of biological role, catalyzes the ATP-dependent phosphorylation of N-acetyl-L-glutamate. In Klebsiella pneumoniae subsp. pneumoniae (strain ATCC 700721 / MGH 78578), this protein is Acetylglutamate kinase.